Reading from the N-terminus, the 168-residue chain is Fusaric acid resistance protein FusE (168 aa).

In terms of biological role, involved in the resistance (detoxification) of the fungal toxin fusaric acid. The polypeptide is Fusaric acid resistance protein FusE (fusE) (Burkholderia cepacia (Pseudomonas cepacia)).